The following is a 295-amino-acid chain: Tyrosine transport system permease protein (295 aa).

8 consecutive transmembrane segments (helical) span residues 3-23 (GIIS…GVYI), 57-77 (VVAT…TGIL), 81-101 (FKIS…SINL), 122-142 (ISPI…LDLF), 173-193 (ILGL…MAQF), 200-220 (NMGI…ITLF), 232-252 (IIVG…LGML), and 256-276 (LKLI…LNIS).

Belongs to the binding-protein-dependent transport system permease family. In terms of assembly, the complex is probably composed of two ATP-binding proteins (CDR20291_0806), two transmembrane proteins (CDR20291_0807) and a solute-binding protein (CDR20291_0805).

It is found in the cell membrane. Functionally, probably part of an ABC transporter complex involved in tyrosine uptake. May also import phenylalanine. Probably responsible for the translocation of the substrate across the membrane. This chain is Tyrosine transport system permease protein, found in Clostridioides difficile (strain R20291) (Peptoclostridium difficile).